The chain runs to 29 residues: Cytochrome b6-f complex subunit 8 (29 aa).

The chain crosses the membrane as a helical span at residues I3–V23.

It belongs to the PetN family. In terms of assembly, the 4 large subunits of the cytochrome b6-f complex are cytochrome b6, subunit IV (17 kDa polypeptide, PetD), cytochrome f and the Rieske protein, while the 4 small subunits are PetG, PetL, PetM and PetN. The complex functions as a dimer.

It is found in the plastid. The protein localises to the chloroplast thylakoid membrane. Its function is as follows. Component of the cytochrome b6-f complex, which mediates electron transfer between photosystem II (PSII) and photosystem I (PSI), cyclic electron flow around PSI, and state transitions. This Staurastrum punctulatum (Green alga) protein is Cytochrome b6-f complex subunit 8.